The primary structure comprises 278 residues: Release factor glutamine methyltransferase (278 aa).

S-adenosyl-L-methionine is bound by residues Gly117 to Gly121, Asp140, and Asn184. A substrate-binding site is contributed by Asn184 to Tyr187.

It belongs to the protein N5-glutamine methyltransferase family. PrmC subfamily.

It catalyses the reaction L-glutaminyl-[peptide chain release factor] + S-adenosyl-L-methionine = N(5)-methyl-L-glutaminyl-[peptide chain release factor] + S-adenosyl-L-homocysteine + H(+). Functionally, methylates the class 1 translation termination release factors RF1/PrfA and RF2/PrfB on the glutamine residue of the universally conserved GGQ motif. The protein is Release factor glutamine methyltransferase of Staphylococcus aureus (strain NCTC 8325 / PS 47).